We begin with the raw amino-acid sequence, 463 residues long: ATP synthase subunit beta (463 aa).

Position 152–159 (152–159 (GGAGVGKT)) interacts with ATP.

It belongs to the ATPase alpha/beta chains family. F-type ATPases have 2 components, CF(1) - the catalytic core - and CF(0) - the membrane proton channel. CF(1) has five subunits: alpha(3), beta(3), gamma(1), delta(1), epsilon(1). CF(0) has three main subunits: a(1), b(2) and c(9-12). The alpha and beta chains form an alternating ring which encloses part of the gamma chain. CF(1) is attached to CF(0) by a central stalk formed by the gamma and epsilon chains, while a peripheral stalk is formed by the delta and b chains.

It localises to the cell membrane. It catalyses the reaction ATP + H2O + 4 H(+)(in) = ADP + phosphate + 5 H(+)(out). In terms of biological role, produces ATP from ADP in the presence of a proton gradient across the membrane. The catalytic sites are hosted primarily by the beta subunits. This Clostridium botulinum (strain Eklund 17B / Type B) protein is ATP synthase subunit beta.